Consider the following 491-residue polypeptide: Carboxypeptidase SOL1 (491 aa).

Residues Met1 to Ala25 form the signal peptide. Over Arg26–Asn452 the chain is Extracellular. A glycan (N-linked (GlcNAc...) asparagine) is linked at Asn39. Residues Gly64–Leu338 enclose the Peptidase M14 domain. Zn(2+)-binding residues include His125 and Glu128. Substrate contacts are provided by residues His125 to Glu128 and Asn186 to Arg187. Zn(2+) is bound at residue His226. Asn268 carries an N-linked (GlcNAc...) asparagine glycan. Tyr286 contacts substrate. Catalysis depends on Glu308, which acts as the Proton donor/acceptor. The chain crosses the membrane as a helical span at residues Asn453–Leu470. Residues Gln471–Val491 are Cytoplasmic-facing.

This sequence belongs to the peptidase M14 family. It depends on Zn(2+) as a cofactor. As to expression, expressed in roots, shoots, leaves, flowers and siliques.

Its subcellular location is the endosome membrane. Its function is as follows. Possesses in vitro carboxypeptidase activity against the C-terminal arginine and lysine residues. Involved in the maturation of CLE19. Removes the C-terminal arginine residue of CLE19 proprotein. The cleavage of the C-terminal arginine residue is necessary for CLE19 activity in vivo. Is not involved in generating active CLV3. Is not involved in CLE19 or CLV3 perception. The protein is Carboxypeptidase SOL1 of Arabidopsis thaliana (Mouse-ear cress).